The chain runs to 162 residues: MNVTAIYPGTFDPITLGHADLVGRASRIFDRVILAVAESKAKTPLFDFGERLALAREAVAEMPNVEVVGFNSLLVDCARTHGATVILRGLRAVSDFEFEFQMAGMNRSLGPEIETIFLTPGESYAFLSSSVIREIAKFGGDVSAFVPGHVRAALMRKFAGSG.

Threonine 10 provides a ligand contact to substrate. ATP is bound by residues 10–11 and histidine 18; that span reads TF. 3 residues coordinate substrate: lysine 42, leucine 74, and arginine 88. Residues 89 to 91, glutamate 99, and 124 to 130 contribute to the ATP site; these read GLR and YAFLSSS.

Belongs to the bacterial CoaD family. As to quaternary structure, homohexamer. The cofactor is Mg(2+).

Its subcellular location is the cytoplasm. The enzyme catalyses (R)-4'-phosphopantetheine + ATP + H(+) = 3'-dephospho-CoA + diphosphate. It participates in cofactor biosynthesis; coenzyme A biosynthesis; CoA from (R)-pantothenate: step 4/5. Reversibly transfers an adenylyl group from ATP to 4'-phosphopantetheine, yielding dephospho-CoA (dPCoA) and pyrophosphate. The protein is Phosphopantetheine adenylyltransferase of Methylococcus capsulatus (strain ATCC 33009 / NCIMB 11132 / Bath).